A 129-amino-acid polypeptide reads, in one-letter code: UPF0102 protein Ctha_1382 (129 aa).

The protein belongs to the UPF0102 family.

This Chloroherpeton thalassium (strain ATCC 35110 / GB-78) protein is UPF0102 protein Ctha_1382.